The primary structure comprises 408 residues: Putative gustatory receptor 58b (408 aa).

At 1–44 (MLHPKLGRVMNVVYYHSVVFALMSTTLRIRSCRKCLRLEKVSRT) the chain is on the cytoplasmic side. The chain crosses the membrane as a helical span at residues 45–65 (YTIYSFFVGIFLFLNLYFMVP). The Extracellular portion of the chain corresponds to 66 to 82 (RIMEDGYMKYNIVLQWN). The helical transmembrane segment at 83 to 103 (FFVMLFLRAIAVVSCYGTLWL) threads the bilayer. Topologically, residues 104–150 (KRHKIIQLYKYSLIYWKRFGHITRAIVDKKELLDLQESLARIMIRKI) are cytoplasmic. The chain crosses the membrane as a helical span at residues 151-171 (ILLYSAFLCSTVLQYQLLSVI). Residues 172–193 (NPQIFLAFCARLTHFLHFLCVK) lie on the Extracellular side of the membrane. The helical transmembrane segment at 194-214 (MGFFGVLVLLNHQFLVIHLAI) threads the bilayer. Residues 215–245 (NALHGRKARKKWKALRSVAAMHLKTLRLARR) lie on the Cytoplasmic side of the membrane. Residues 246 to 266 (IFDMFDIANATVFINMFMTAI) traverse the membrane as a helical segment. Residues 267 to 284 (NILYHAVQYSNSSIKSNG) are Extracellular-facing. A glycan (N-linked (GlcNAc...) asparagine) is linked at N277. The helical transmembrane segment at 285-305 (WGILFGNGLIVFNFWGTMALM) threads the bilayer. The Cytoplasmic segment spans residues 306–364 (EMLDSVVTSCNNTGQQLRQLSDLPKVGPKMQRELDVFTMQLRQNRLVYKICGIVELDKP). A helical transmembrane segment spans residues 365–385 (ACLSYIGSILSNVIILMQFDL). The Extracellular segment spans residues 386 to 408 (RRQRQPINDRQYLIHLMKNKTKV). An N-linked (GlcNAc...) asparagine glycan is attached at N404.

Belongs to the insect chemoreceptor superfamily. Gustatory receptor (GR) family. Gr22e subfamily. As to expression, expressed in the adult labellar chemosensory neurons, labral sense organ and thorax. In larvae, is in neurons of the terminal external chemosensory organ as well as in the dorsal pharyngeal sense organ.

It localises to the cell membrane. Its function is as follows. Probable gustatory receptor which mediates acceptance or avoidance behavior, depending on its substrates. This chain is Putative gustatory receptor 58b (Gr58b), found in Drosophila melanogaster (Fruit fly).